The sequence spans 433 residues: Ornithine decarboxylase, chloroplastic (433 aa).

At Lys96 the chain carries N6-(pyridoxal phosphate)lysine. Pyridoxal 5'-phosphate is bound by residues Ser228, Gly266, and 299 to 302 (EPGR). Residue 342-343 (YD) coordinates substrate. The active-site Proton donor; shared with dimeric partner is Cys378. Asp379 provides a ligand contact to substrate. Pyridoxal 5'-phosphate is bound at residue Tyr407.

It belongs to the Orn/Lys/Arg decarboxylase class-II family. Homodimer. Only the dimer is catalytically active, as the active sites are constructed of residues from both monomers. It depends on pyridoxal 5'-phosphate as a cofactor.

Its subcellular location is the plastid. It is found in the chloroplast. The catalysed reaction is L-ornithine + H(+) = putrescine + CO2. It functions in the pathway alkaloid biosynthesis; nicotine biosynthesis. Its pathway is amine and polyamine biosynthesis; putrescine biosynthesis via L-ornithine pathway; putrescine from L-ornithine: step 1/1. In terms of biological role, involved in the biosynthesis of pyridine alkaloid natural products, leading mainly to the production of anabasine, anatabine, nicotine and nornicotine, effective deterrents against herbivores with antiparasitic and pesticide properties (neurotoxins); nornicotine serves as the precursor in the synthesis of the carcinogen compound N'-nitrosonornicotine (NNN). Catalyzes the first and rate-limiting step of polyamine biosynthesis that converts ornithine into putrescine, which is the precursor for the polyamines, spermidine and spermine. Polyamines are essential for cell proliferation and are implicated in cellular processes, ranging from DNA replication to apoptosis. This chain is Ornithine decarboxylase, chloroplastic, found in Nicotiana glauca (Glaucous tobacco).